We begin with the raw amino-acid sequence, 735 residues long: Catalase-peroxidase (735 aa).

Positions 1–25 (MSDSKCPVTGKSSRQVAGGGTSNRD) are disordered. The segment at residues 95–223 (WHSAGTYRMG…LAAVQMGLIY (129 aa)) is a cross-link (tryptophyl-tyrosyl-methioninium (Trp-Tyr) (with M-249)). H96 acts as the Proton acceptor in catalysis. The tryptophyl-tyrosyl-methioninium (Tyr-Met) (with W-95) cross-link spans 223-249 (YINPEGPDGNPDPVASGRDVRETFARM). H264 contributes to the heme b binding site.

Belongs to the peroxidase family. Peroxidase/catalase subfamily. In terms of assembly, homodimer or homotetramer. Requires heme b as cofactor. In terms of processing, formation of the three residue Trp-Tyr-Met cross-link is important for the catalase, but not the peroxidase activity of the enzyme.

It carries out the reaction H2O2 + AH2 = A + 2 H2O. The catalysed reaction is 2 H2O2 = O2 + 2 H2O. Bifunctional enzyme with both catalase and broad-spectrum peroxidase activity. This chain is Catalase-peroxidase, found in Trichlorobacter lovleyi (strain ATCC BAA-1151 / DSM 17278 / SZ) (Geobacter lovleyi).